A 974-amino-acid chain; its full sequence is Villin-4 (974 aa).

Gelsolin-like repeat units lie at residues 29 to 79, 150 to 190, 262 to 305, 394 to 451, 532 to 572, and 634 to 675; these read FIPT…DEAG, VHVK…QERA, GQAN…DDRK, LQVW…EERG, MQAI…TDQE, and LKVT…KNKL. The interval 738–783 is disordered; it reads VKNGGTPVADKPKRRTPASYGGRASVPDKSQQRSRSMSFSPDRVRV. A phosphoserine mark is found at S777 and S787. 2 disordered regions span residues 801-833 and 845-930; these read NARN…APKS and KIPP…PVSD. The segment covering 824–833 has biased composition (low complexity); it reads SSKFAPAPKS. Residues 872-887 are compositionally biased toward basic and acidic residues; that stretch reads NSKEQEEKKENDKEEG. Residues 888–898 are compositionally biased toward polar residues; that stretch reads SMSSRIESLTI. S890 is subject to Phosphoserine. Residues 909 to 974 form the HP domain; sequence EEDLPAHPYD…NKFKMAVQLF (66 aa). Positions 912 to 921 are enriched in basic and acidic residues; that stretch reads LPAHPYDRLK.

It belongs to the villin/gelsolin family. Preferentially expressed in vegetative tissues. Detected in the whole seedling, hypocotyl, cotyledon, primary root, roots hair cells and trichomes. Expressed in flowers but not in the silique.

It is found in the cytoplasm. The protein resides in the cytoskeleton. In terms of biological role, binds actin and actin filament bundles in a Ca(2+)-insensitive manner, but caps the barbed end of actin filaments and is able to sever them in a calcium-dependent manner. Involved in root hair growth through regulating actin organization in a Ca(2+)-dependent manner. The chain is Villin-4 from Arabidopsis thaliana (Mouse-ear cress).